A 665-amino-acid chain; its full sequence is Translation factor guf1, mitochondrial (665 aa).

A mitochondrion-targeting transit peptide spans 1 to 53 (MRGCLQVLRWLSTSPARRPVSSGLRLRSYEIVSPSILRPFTSTVRRQAQASRN). A tr-type G domain is found at 67-247 (ERFRNFCIVA…TVIERIPAPV (181 aa)). GTP-binding positions include 76-83 (AHVDHGKS), 140-144 (DTPGH), and 194-197 (NKVD).

This sequence belongs to the TRAFAC class translation factor GTPase superfamily. Classic translation factor GTPase family. LepA subfamily.

The protein localises to the mitochondrion inner membrane. It carries out the reaction GTP + H2O = GDP + phosphate + H(+). Functionally, promotes mitochondrial protein synthesis. May act as a fidelity factor of the translation reaction, by catalyzing a one-codon backward translocation of tRNAs on improperly translocated ribosomes. Binds to mitochondrial ribosomes in a GTP-dependent manner. The polypeptide is Translation factor guf1, mitochondrial (guf1) (Talaromyces stipitatus (strain ATCC 10500 / CBS 375.48 / QM 6759 / NRRL 1006) (Penicillium stipitatum)).